A 311-amino-acid polypeptide reads, in one-letter code: RNA polymerase sigma factor SigA4 (311 aa).

Positions 78–148 (MLKANLRLVV…TRAIDNHART (71 aa)) are sigma-70 factor domain-2. The short motif at 102–105 (DLIQ) is the Interaction with polymerase core subunit RpoC element. Residues 157–234 (EKISRIKKMT…DPKSLEPMDA (78 aa)) form a sigma-70 factor domain-3 region. Residues 247 to 304 (WLAHLTEREQQVLQLRFGLHDGEQHTLAEIGRRLNVSRERIRQVEARALQKLRVLSQQ) are sigma-70 factor domain-4. The H-T-H motif DNA-binding region spans 273-292 (LAEIGRRLNVSRERIRQVEA).

This sequence belongs to the sigma-70 factor family.

The protein localises to the cytoplasm. Its function is as follows. Sigma factors are initiation factors that promote the attachment of RNA polymerase to specific initiation sites and are then released. This chain is RNA polymerase sigma factor SigA4 (sigA4), found in Synechococcus elongatus (strain ATCC 33912 / PCC 7942 / FACHB-805) (Anacystis nidulans R2).